We begin with the raw amino-acid sequence, 530 residues long: Probable glycerol-3-phosphate acyltransferase 2 (530 aa).

3 consecutive transmembrane segments (helical) span residues 70–90 (YFMVVAFEAGGVIRSLFLLVL), 93–113 (FISLMSYEMGLKTMVMLSFFG), and 275–295 (LVLFMWAPFAAVLAAARLVFG). An HXXXXD motif motif is present at residues 339 to 344 (HRTLLD).

This sequence belongs to the GPAT/DAPAT family. As to expression, weakly or not expressed in roots, leaves, seedlings, developing siliques and flower buds.

It is found in the membrane. It carries out the reaction sn-glycerol 3-phosphate + an acyl-CoA = a 1-acyl-sn-glycero-3-phosphate + CoA. It functions in the pathway phospholipid metabolism; CDP-diacylglycerol biosynthesis; CDP-diacylglycerol from sn-glycerol 3-phosphate: step 1/3. Its function is as follows. Esterifies acyl-group from acyl-ACP to the sn-1 position of glycerol-3-phosphate, an essential step in glycerolipid biosynthesis. The chain is Probable glycerol-3-phosphate acyltransferase 2 (GPAT2) from Arabidopsis thaliana (Mouse-ear cress).